Consider the following 245-residue polypeptide: 1-(5-phosphoribosyl)-5-[(5-phosphoribosylamino)methylideneamino] imidazole-4-carboxamide isomerase (245 aa).

The active-site Proton acceptor is the D8. D129 (proton donor) is an active-site residue.

This sequence belongs to the HisA/HisF family.

The protein resides in the cytoplasm. It catalyses the reaction 1-(5-phospho-beta-D-ribosyl)-5-[(5-phospho-beta-D-ribosylamino)methylideneamino]imidazole-4-carboxamide = 5-[(5-phospho-1-deoxy-D-ribulos-1-ylimino)methylamino]-1-(5-phospho-beta-D-ribosyl)imidazole-4-carboxamide. It participates in amino-acid biosynthesis; L-histidine biosynthesis; L-histidine from 5-phospho-alpha-D-ribose 1-diphosphate: step 4/9. This chain is 1-(5-phosphoribosyl)-5-[(5-phosphoribosylamino)methylideneamino] imidazole-4-carboxamide isomerase, found in Pelobacter propionicus (strain DSM 2379 / NBRC 103807 / OttBd1).